The primary structure comprises 315 residues: tRNA pseudouridine synthase B (315 aa).

The active-site Nucleophile is the Asp-47.

Belongs to the pseudouridine synthase TruB family. Type 1 subfamily.

It carries out the reaction uridine(55) in tRNA = pseudouridine(55) in tRNA. Functionally, responsible for synthesis of pseudouridine from uracil-55 in the psi GC loop of transfer RNAs. The protein is tRNA pseudouridine synthase B of Shewanella amazonensis (strain ATCC BAA-1098 / SB2B).